A 428-amino-acid chain; its full sequence is 3-phosphoshikimate 1-carboxyvinyltransferase (428 aa).

Residues K21, S22, and R26 each contribute to the 3-phosphoshikimate site. K21 is a phosphoenolpyruvate binding site. Phosphoenolpyruvate-binding residues include G94 and R122. The 3-phosphoshikimate site is built by S166, S167, Q168, S194, D306, and K333. Residue Q168 coordinates phosphoenolpyruvate. D306 acts as the Proton acceptor in catalysis. Positions 337, 379, and 405 each coordinate phosphoenolpyruvate.

It belongs to the EPSP synthase family. Monomer.

It localises to the cytoplasm. It catalyses the reaction 3-phosphoshikimate + phosphoenolpyruvate = 5-O-(1-carboxyvinyl)-3-phosphoshikimate + phosphate. Its pathway is metabolic intermediate biosynthesis; chorismate biosynthesis; chorismate from D-erythrose 4-phosphate and phosphoenolpyruvate: step 6/7. Catalyzes the transfer of the enolpyruvyl moiety of phosphoenolpyruvate (PEP) to the 5-hydroxyl of shikimate-3-phosphate (S3P) to produce enolpyruvyl shikimate-3-phosphate and inorganic phosphate. This is 3-phosphoshikimate 1-carboxyvinyltransferase from Clostridium acetobutylicum (strain ATCC 824 / DSM 792 / JCM 1419 / IAM 19013 / LMG 5710 / NBRC 13948 / NRRL B-527 / VKM B-1787 / 2291 / W).